Reading from the N-terminus, the 128-residue chain is Probable cystatin-15 (128 aa).

The N-terminal stretch at 1 to 20 (MFWKLPLLLGLLALGPHVCS) is a signal peptide. Cys82 and Cys92 are joined by a disulfide. The N-linked (GlcNAc...) asparagine glycan is linked to Asn104. Cys105 and Cys125 form a disulfide bridge.

Belongs to the cystatin family.

Its subcellular location is the secreted. The protein is Probable cystatin-15 of Bos taurus (Bovine).